A 351-amino-acid polypeptide reads, in one-letter code: Cell shape-determining protein MreB (351 aa).

ATP contacts are provided by residues 20–22 (TAN), 169–171 (GGT), 217–220 (ERIK), and 299–302 (GGAL).

It belongs to the FtsA/MreB family. In terms of assembly, forms polymers.

It localises to the cytoplasm. Forms membrane-associated dynamic filaments that are essential for cell shape determination. Acts by regulating cell wall synthesis and cell elongation, and thus cell shape. A feedback loop between cell geometry and MreB localization may maintain elongated cell shape by targeting cell wall growth to regions of negative cell wall curvature. The polypeptide is Cell shape-determining protein MreB (Haemophilus influenzae (strain ATCC 51907 / DSM 11121 / KW20 / Rd)).